The sequence spans 245 residues: 1-(5-phosphoribosyl)-5-[(5-phosphoribosylamino)methylideneamino] imidazole-4-carboxamide isomerase (245 aa).

Residue Asp7 is the Proton acceptor of the active site. Asp129 (proton donor) is an active-site residue.

This sequence belongs to the HisA/HisF family.

The protein localises to the cytoplasm. The enzyme catalyses 1-(5-phospho-beta-D-ribosyl)-5-[(5-phospho-beta-D-ribosylamino)methylideneamino]imidazole-4-carboxamide = 5-[(5-phospho-1-deoxy-D-ribulos-1-ylimino)methylamino]-1-(5-phospho-beta-D-ribosyl)imidazole-4-carboxamide. It functions in the pathway amino-acid biosynthesis; L-histidine biosynthesis; L-histidine from 5-phospho-alpha-D-ribose 1-diphosphate: step 4/9. This Escherichia coli O6:K15:H31 (strain 536 / UPEC) protein is 1-(5-phosphoribosyl)-5-[(5-phosphoribosylamino)methylideneamino] imidazole-4-carboxamide isomerase.